A 167-amino-acid polypeptide reads, in one-letter code: uncharacterized protein (167 aa).

The protein resides in the mitochondrion. This is an uncharacterized protein from Marchantia polymorpha (Common liverwort).